We begin with the raw amino-acid sequence, 1242 residues long: Membrane-associated phosphatidylinositol transfer protein 1 (1242 aa).

Phosphothreonine occurs at positions 59, 282, and 287. The disordered stretch occupies residues 259-330 (CNTGSEGPEA…HGGGVSPQSL (72 aa)). Over residues 272 to 282 (GKPSTETQPGT) the composition is skewed to polar residues. Residues 299-319 (ASPDASFGKQWSSSSRSSYSS) are compositionally biased toward low complexity. Residues S300, S304, S319, S326, S329, S342, S345, S346, and S373 each carry the phosphoserine modification. A Phosphoserine; by CDK1 modification is found at S382. Residues 581–593 (AGTGSRGSSRRGS) are compositionally biased toward low complexity. Residues 581-678 (AGTGSRGSSR…PASSEAPDGP (98 aa)) are disordered. A phosphoserine mark is found at S593, S600, and S621. The segment covering 643–656 (GSQNSLQVAPTVTS) has biased composition (polar residues). In terms of domain architecture, DDHD spans 684–878 (LDFKVSGFFL…VAFILRQVIE (195 aa)). Phosphoserine is present on S894. Residues 1207 to 1242 (RSRGPSQVDLEGPGTPPTTLARGKTRSISLKLDSEE) are disordered. Residue R1209 is modified to Omega-N-methylarginine. A Phosphoserine modification is found at S1235.

It belongs to the PtdIns transfer protein family. PI transfer class IIA subfamily. In terms of assembly, interacts with PIK4CA and VAPB. Interacts with PTK2B via its C-terminus. Interacts with RHOA. Has higher affinity for the inactive, GDP-bound form of RHOA. The CDK1-phosphorylated form interacts with PLK1. Post-translationally, phosphorylated on multiple sites by CDK1 at the onset of mitosis. Phosphorylation facilitates dissociation from the Golgi complex and is required for interaction with PLK1. In terms of processing, phosphorylated on threonine residues upon treatment with oleic acid. Phosphorylated on tyrosine residues by PTK2B.

Its subcellular location is the cytoplasm. The protein resides in the golgi apparatus. The protein localises to the golgi stack membrane. It is found in the endoplasmic reticulum membrane. It localises to the lipid droplet. Its subcellular location is the cleavage furrow. The protein resides in the midbody. The catalysed reaction is a 1,2-diacyl-sn-glycero-3-phospho-(1D-myo-inositol)(in) = a 1,2-diacyl-sn-glycero-3-phospho-(1D-myo-inositol)(out). Functionally, catalyzes the transfer of phosphatidylinositol (PI) between membranes. Binds PI, phosphatidylcholine (PC) and phosphatidic acid (PA) with the binding affinity order of PI &gt; PA &gt; PC. Regulates RHOA activity, and plays a role in cytoskeleton remodeling. Necessary for normal completion of cytokinesis. Plays a role in maintaining normal diacylglycerol levels in the Golgi apparatus. Necessary for maintaining the normal structure of the endoplasmic reticulum and the Golgi apparatus. Required for protein export from the endoplasmic reticulum and the Golgi. Binds calcium ions. This Rattus norvegicus (Rat) protein is Membrane-associated phosphatidylinositol transfer protein 1 (Pitpnm1).